The following is a 317-amino-acid chain: Polysulfide reductase chain C (317 aa).

Transmembrane regions (helical) follow at residues 20 to 40 (IAVYLFLAGLSAGAIISAIII), 54 to 75 (IIKAGALIAPLTIGAGLLLLIF), 98 to 118 (LGVLALFAYFPVVLIFLLGVF), 147 to 167 (IVTFVLAIGVGAYTGFLLSAM), 182 to 202 (FLASGISAGISGNLLIGLLFF), 221 to 237 (VILFEAFLLFILFVGMY), 259 to 279 (LFWLGVAGMGLALPVVLNVAL), and 289 to 309 (FVMLNALIVLAGVMALRFYIL).

Belongs to the NrfD family. Functional polysulfide reductase is made up of three different (A, B, and C) subunits.

The protein localises to the cell inner membrane. In terms of biological role, could possibly serve as the membrane anchor of the enzyme. Functionally, component of the phosphorylative electron transport system with polysulfide as the terminal acceptor. The sequence is that of Polysulfide reductase chain C (psrC) from Wolinella succinogenes (strain ATCC 29543 / DSM 1740 / CCUG 13145 / JCM 31913 / LMG 7466 / NCTC 11488 / FDC 602W) (Vibrio succinogenes).